A 208-amino-acid chain; its full sequence is MLEIGLTGGIGSGKTRVADMFAARGAAIIDTDLLAHEITAPGGQAIPALVEAFGPQCLRPDGAMDRDAMRAVVFADPAAKARLEGITHPLIRELTTSRAAEIAHAGEHPYLIYVVPLLVESGAWLNRVGRVLVVDCSEDTQIARVMSRNGFSREQVLAIMAKQATRAQRLAVAHDVIDNDGPVEALTAQVDQLDRTYRALSAAGVTQA.

The 206-residue stretch at 3–208 folds into the DPCK domain; that stretch reads EIGLTGGIGS…ALSAAGVTQA (206 aa). 11-16 lines the ATP pocket; sequence GSGKTR.

This sequence belongs to the CoaE family.

The protein resides in the cytoplasm. It catalyses the reaction 3'-dephospho-CoA + ATP = ADP + CoA + H(+). Its pathway is cofactor biosynthesis; coenzyme A biosynthesis; CoA from (R)-pantothenate: step 5/5. Its function is as follows. Catalyzes the phosphorylation of the 3'-hydroxyl group of dephosphocoenzyme A to form coenzyme A. The polypeptide is Dephospho-CoA kinase (Cupriavidus pinatubonensis (strain JMP 134 / LMG 1197) (Cupriavidus necator (strain JMP 134))).